We begin with the raw amino-acid sequence, 470 residues long: Pheromone a factor receptor (470 aa).

Residues 1-5 (MSYKS) are Extracellular-facing. Residues 6 to 23 (AIIGLCLLAVILLAPPLA) traverse the membrane as a helical segment. Residues 24–29 (WHSHTK) lie on the Cytoplasmic side of the membrane. Residues 30 to 53 (NIPAIILITWLLTMNLTCIVDAAI) traverse the membrane as a helical segment. Residues 54 to 70 (WSDDDFLTRWDGKGWCD) are Extracellular-facing. A helical transmembrane segment spans residues 71–98 (IVIKLQVGANIGISCAVTNIIYNLHTIL). Residues 99–116 (KADSVLPDLSSWTKIVKD) are Cytoplasmic-facing. Residues 117-134 (LVISLFTPVMVMGFSYLL) form a helical membrane-spanning segment. Topologically, residues 135-155 (QVFRYGIARYNGCQNLLSPTW) are extracellular. Residues 156–183 (ITTVLYTMWMLIWSFVGAVYATLVLFVF) traverse the membrane as a helical segment. The Cytoplasmic portion of the chain corresponds to 184-205 (YKKRKDVRDILHCTNSGLNLTR). A helical transmembrane segment spans residues 206–228 (FARLLIFCFIIILVMFPFSVYTF). The Extracellular portion of the chain corresponds to 229–266 (VQDLQQVEGHYTFKNTHSSTIWNTIIKFDPGRPIYNIW). The helical transmembrane segment at 267-285 (LYVLMSYLVFLIFGLGSDA) threads the bilayer. At 286-470 (LHMYSKFLRS…EHSSENTAGP (185 aa)) the chain is on the cytoplasmic side. A hydrophilic region spans residues 300 to 470 (FVLDMWKRFI…EHSSENTAGP (171 aa)). The segment at 440–470 (NFEGESLCYSPASKEENSSSNEHSSENTAGP) is disordered.

This sequence belongs to the G-protein coupled receptor 4 family.

It localises to the membrane. Its function is as follows. Receptor for the peptide pheromone a factor. The polypeptide is Pheromone a factor receptor (STE3) (Saccharomyces cerevisiae (strain ATCC 204508 / S288c) (Baker's yeast)).